Consider the following 311-residue polypeptide: Serine hydrolase-like protein (311 aa).

The AB hydrolase-1 domain maps to 27–227; sequence PPVLCLHGWL…FVSKEMFVHS (201 aa). Ser102 is a catalytic residue. At Ser210 the chain carries Phosphoserine.

Belongs to the AB hydrolase superfamily. In terms of tissue distribution, ubiquitous. High protein expression in skeletal and cardiac muscle.

It is found in the cytoplasm. It localises to the perinuclear region. The protein localises to the peroxisome. In terms of biological role, probable serine hydrolase. May be related to cell muscle hypertrophy. This chain is Serine hydrolase-like protein (Serhl), found in Mus musculus (Mouse).